The chain runs to 269 residues: MRCIIKRLFQNILTRSKRGSADGGSAEALPPKSLRQFVGGAYKEVGAEFVGYLVDLCGLQPDEAVLDVGCGSGRMALPLTGYLNSEGRYAGFDISQKAIAWCQEHITSAHPNFQFEVSDIYNSLYNPKGKYQSLDFRFPYPDASFDVVFLTSVFTHMFPPDVEHYLDEISRVLKPGGRCLSTYFLLNDESLAHIAEGKSAHNFQHEGPGYRTIHKKRPEEAIGLPETFVRDVYGKFGLAVHEPLHYGSWSGREPHLSFQDIVIATKTAS.

This sequence belongs to the methyltransferase superfamily.

This is Uncharacterised methyltransferase MT1546 from Mycobacterium tuberculosis (strain CDC 1551 / Oshkosh).